Consider the following 321-residue polypeptide: 4-dihydromethyl-trisporate dehydrogenase (321 aa).

The active-site Proton donor is the Tyr51. Substrate is bound at residue His113.

This sequence belongs to the aldo/keto reductase family.

It participates in pheromone biosynthesis; trisporate biosynthesis. Catalyzes the NADP-dependent oxidation of (+) mating-type specific precursor 4-dihydromethyl-trisporate to methyl-trisporate. The polypeptide is 4-dihydromethyl-trisporate dehydrogenase (tdh) (Mucor mucedo (Common pinmould)).